A 465-amino-acid polypeptide reads, in one-letter code: UDP-glycosyltransferase 89A2 (465 aa).

Residues Ser291, 342–344 (VSQ), 359–367 (HCGWNSVLE), and 381–384 (EADQ) contribute to the UDP-alpha-D-glucose site.

It belongs to the UDP-glycosyltransferase family.

Functionally, glucosyltransferase that glucosylates benzoates and benzoate derivatives in vitro. The sequence is that of UDP-glycosyltransferase 89A2 (UGT89A2) from Arabidopsis thaliana (Mouse-ear cress).